We begin with the raw amino-acid sequence, 90 residues long: Small ribosomal subunit protein bS18 (90 aa).

This sequence belongs to the bacterial ribosomal protein bS18 family. As to quaternary structure, part of the 30S ribosomal subunit. Forms a tight heterodimer with protein bS6.

Binds as a heterodimer with protein bS6 to the central domain of the 16S rRNA, where it helps stabilize the platform of the 30S subunit. The chain is Small ribosomal subunit protein bS18 from Bacteroides thetaiotaomicron (strain ATCC 29148 / DSM 2079 / JCM 5827 / CCUG 10774 / NCTC 10582 / VPI-5482 / E50).